The primary structure comprises 360 residues: Protein MGF 360-1L (360 aa).

It belongs to the asfivirus MGF 360 family.

Functionally, plays a role in virus cell tropism, and may be required for efficient virus replication in macrophages. In African swine fever virus (strain Badajoz 1971 Vero-adapted) (Ba71V), this protein is Protein MGF 360-1L.